The following is a 286-amino-acid chain: Transcription factor MYB62 (286 aa).

2 consecutive HTH myb-type domains span residues 16–68 (DEEL…LNYL) and 69–123 (KPDI…QKQA). 2 consecutive DNA-binding regions (H-T-H motif) follow at residues 44–68 (WNHVAKCAGLKRTGKSCRLRWLNYL) and 96–119 (WSKIAQYLPGRTDNEIKNYWRTRV).

As to expression, expressed in leaves and flowers.

Its subcellular location is the nucleus. Transcription repressor of phosphate (Pi) starvation-induced genes. Negatively regulates Pi starvation responses via the repression of gibberellic acid (GA) biosynthesis and signaling. Modulates root architecture, phosphatase activity, and Pi uptake and accumulation. This is Transcription factor MYB62 from Arabidopsis thaliana (Mouse-ear cress).